A 245-amino-acid polypeptide reads, in one-letter code: 1-(5-phosphoribosyl)-5-[(5-phosphoribosylamino)methylideneamino] imidazole-4-carboxamide isomerase (245 aa).

The active-site Proton acceptor is Asp-8. The Proton donor role is filled by Asp-130.

Belongs to the HisA/HisF family.

The protein localises to the cytoplasm. The enzyme catalyses 1-(5-phospho-beta-D-ribosyl)-5-[(5-phospho-beta-D-ribosylamino)methylideneamino]imidazole-4-carboxamide = 5-[(5-phospho-1-deoxy-D-ribulos-1-ylimino)methylamino]-1-(5-phospho-beta-D-ribosyl)imidazole-4-carboxamide. The protein operates within amino-acid biosynthesis; L-histidine biosynthesis; L-histidine from 5-phospho-alpha-D-ribose 1-diphosphate: step 4/9. This is 1-(5-phosphoribosyl)-5-[(5-phosphoribosylamino)methylideneamino] imidazole-4-carboxamide isomerase from Pseudomonas savastanoi pv. phaseolicola (strain 1448A / Race 6) (Pseudomonas syringae pv. phaseolicola (strain 1448A / Race 6)).